A 361-amino-acid chain; its full sequence is tRNA-specific 2-thiouridylase MnmA (361 aa).

ATP is bound by residues 11-18 and Met-37; that span reads GMSGGVDS. Cys-106 functions as the Nucleophile in the catalytic mechanism. A disulfide bond links Cys-106 and Cys-202. Gly-130 provides a ligand contact to ATP. Residues 152–154 are interaction with tRNA; the sequence is KDQ. Cys-202 functions as the Cysteine persulfide intermediate in the catalytic mechanism. The tract at residues 308-309 is interaction with tRNA; sequence RY.

This sequence belongs to the MnmA/TRMU family.

Its subcellular location is the cytoplasm. The catalysed reaction is S-sulfanyl-L-cysteinyl-[protein] + uridine(34) in tRNA + AH2 + ATP = 2-thiouridine(34) in tRNA + L-cysteinyl-[protein] + A + AMP + diphosphate + H(+). Its function is as follows. Catalyzes the 2-thiolation of uridine at the wobble position (U34) of tRNA, leading to the formation of s(2)U34. The protein is tRNA-specific 2-thiouridylase MnmA of Clostridium botulinum (strain Eklund 17B / Type B).